Reading from the N-terminus, the 251-residue chain is Fibroblast growth factor 23 (251 aa).

The first 24 residues, methionine 1–alanine 24, serve as a signal peptide directing secretion. Cysteines 95 and 113 form a disulfide. O-linked (GalNAc) threonine glycosylation is found at threonine 171 and threonine 178. Residues arginine 175–valine 251 form a disordered region. Basic and acidic residues predominate over residues arginine 179–proline 189. Phosphoserine; by FAM20C is present on serine 180.

It belongs to the heparin-binding growth factors family. Interacts with FGFR1, FGFR2, FGFR3 and FGFR4. Affinity between fibroblast growth factors (FGFs) and their receptors is increased by KL and heparan sulfate glycosaminoglycans that function as coreceptors. Following secretion this protein is inactivated by cleavage into a N-terminal fragment and a C-terminal fragment. The processing is effected by proprotein convertases. Post-translationally, O-glycosylated at Thr-171 and Thr-178 by GALNT3 and glycosylation of Thr-178 requires previous glycosylation at Thr171. Glycosylation is necessary for secretion; it blocks processing by proprotein convertases when the O-glycan is alpha 2,6-sialylated. Competition between proprotein convertase cleavage and block of cleavage by O-glycosylation determines the level of secreted active FGF23. In terms of processing, phosphorylation at Ser-180 mediated by FAM20C slows down glycosylation at Thr-178 notably. As to expression, expressed in the parathyroid.

The protein resides in the secreted. Its function is as follows. Regulator of phosphate homeostasis. Inhibits renal tubular phosphate transport by reducing SLC34A1 levels. Regulator of vitamin-D metabolism. Negatively regulates osteoblasts differentiation and matrix mineralization. Acts directly on the parathyroid to decrease PTH secretion. Up-regulates EGR1 expression in the presence of KL. The sequence is that of Fibroblast growth factor 23 (Fgf23) from Rattus norvegicus (Rat).